A 343-amino-acid chain; its full sequence is Small ribosomal subunit biogenesis GTPase RsgA (343 aa).

The CP-type G domain maps to 116–275 (RGQLKPVAAN…LIDSPGIREF (160 aa)). Residues 163–166 (NKFD) and 217–225 (GQSGVGKSS) each bind GTP. Positions 299, 304, 306, and 312 each coordinate Zn(2+).

It belongs to the TRAFAC class YlqF/YawG GTPase family. RsgA subfamily. In terms of assembly, monomer. Associates with 30S ribosomal subunit, binds 16S rRNA. Zn(2+) serves as cofactor.

The protein resides in the cytoplasm. Functionally, one of several proteins that assist in the late maturation steps of the functional core of the 30S ribosomal subunit. Helps release RbfA from mature subunits. May play a role in the assembly of ribosomal proteins into the subunit. Circularly permuted GTPase that catalyzes slow GTP hydrolysis, GTPase activity is stimulated by the 30S ribosomal subunit. The polypeptide is Small ribosomal subunit biogenesis GTPase RsgA (Pseudomonas fluorescens (strain SBW25)).